Consider the following 200-residue polypeptide: Superoxide dismutase [Mn] 1 (200 aa).

Mn(2+) is bound by residues histidine 29, histidine 76, aspartate 158, and histidine 162.

This sequence belongs to the iron/manganese superoxide dismutase family. Homodimer or homotetramer. It depends on Mn(2+) as a cofactor.

The catalysed reaction is 2 superoxide + 2 H(+) = H2O2 + O2. Its activity is regulated as follows. Inhibited by hydrogen peroxide. Is resistant to cyanide and azide inhibition. Functionally, destroys superoxide anion radicals which are normally produced within the cells and which are toxic to biological systems. This Halobacterium salinarum (strain ATCC 700922 / JCM 11081 / NRC-1) (Halobacterium halobium) protein is Superoxide dismutase [Mn] 1 (sod1).